The primary structure comprises 845 residues: U-box domain-containing protein 52 (845 aa).

Disordered stretches follow at residues 180–210 (RPSE…LPPE) and 229–258 (SPAL…EVST). Residues 187–204 (SGSIRFERSSSTSGSTDS) show a composition bias toward low complexity. The segment covering 236–251 (MGSNAVAQMDTSSSGT) has biased composition (polar residues). The stretch at 351-468 (SITDNQVNLN…REKDKLQASL (118 aa)) forms a coiled coil. Residues 490–754 (FAENLKIGIG…DLKDQIIPAL (265 aa)) enclose the Protein kinase domain. ATP contacts are provided by residues 496–504 (IGIGAYGSV) and K517. Catalysis depends on D612, which acts as the Proton acceptor. The 72-residue stretch at 774–845 (GPPSHFICPL…AIMEWKSNKR (72 aa)) folds into the U-box domain.

Belongs to the protein kinase superfamily. Ser/Thr protein kinase family.

The enzyme catalyses L-seryl-[protein] + ATP = O-phospho-L-seryl-[protein] + ADP + H(+). The catalysed reaction is L-threonyl-[protein] + ATP = O-phospho-L-threonyl-[protein] + ADP + H(+). It carries out the reaction S-ubiquitinyl-[E2 ubiquitin-conjugating enzyme]-L-cysteine + [acceptor protein]-L-lysine = [E2 ubiquitin-conjugating enzyme]-L-cysteine + N(6)-ubiquitinyl-[acceptor protein]-L-lysine.. The protein operates within protein modification; protein ubiquitination. Functions as an E3 ubiquitin ligase. This is U-box domain-containing protein 52 (PUB52) from Arabidopsis thaliana (Mouse-ear cress).